A 383-amino-acid chain; its full sequence is S-adenosylmethionine synthase (383 aa).

H15 is a binding site for ATP. D17 lines the Mg(2+) pocket. A K(+)-binding site is contributed by E43. The L-methionine site is built by E56 and Q99. Residues 99–109 (QSPDINQGVDR) form a flexible loop region. ATP contacts are provided by residues 164–166 (DAK), 230–231 (RF), D239, 245–246 (RK), A262, and K266. D239 serves as a coordination point for L-methionine. K270 contacts L-methionine.

This sequence belongs to the AdoMet synthase family. As to quaternary structure, homotetramer; dimer of dimers. Mg(2+) serves as cofactor. The cofactor is K(+).

The protein resides in the cytoplasm. It catalyses the reaction L-methionine + ATP + H2O = S-adenosyl-L-methionine + phosphate + diphosphate. The protein operates within amino-acid biosynthesis; S-adenosyl-L-methionine biosynthesis; S-adenosyl-L-methionine from L-methionine: step 1/1. Catalyzes the formation of S-adenosylmethionine (AdoMet) from methionine and ATP. The overall synthetic reaction is composed of two sequential steps, AdoMet formation and the subsequent tripolyphosphate hydrolysis which occurs prior to release of AdoMet from the enzyme. In Shewanella denitrificans (strain OS217 / ATCC BAA-1090 / DSM 15013), this protein is S-adenosylmethionine synthase.